A 123-amino-acid chain; its full sequence is Large ribosomal subunit protein bL12 (123 aa).

It belongs to the bacterial ribosomal protein bL12 family. In terms of assembly, homodimer. Part of the ribosomal stalk of the 50S ribosomal subunit. Forms a multimeric L10(L12)X complex, where L10 forms an elongated spine to which 2 to 4 L12 dimers bind in a sequential fashion. Binds GTP-bound translation factors.

Forms part of the ribosomal stalk which helps the ribosome interact with GTP-bound translation factors. Is thus essential for accurate translation. The sequence is that of Large ribosomal subunit protein bL12 from Chlorobium luteolum (strain DSM 273 / BCRC 81028 / 2530) (Pelodictyon luteolum).